Reading from the N-terminus, the 173-residue chain is Crossover junction endodeoxyribonuclease RuvC (173 aa).

Residues D8, E67, and D139 contribute to the active site. Residues D8, E67, and D139 each coordinate Mg(2+).

The protein belongs to the RuvC family. As to quaternary structure, homodimer which binds Holliday junction (HJ) DNA. The HJ becomes 2-fold symmetrical on binding to RuvC with unstacked arms; it has a different conformation from HJ DNA in complex with RuvA. In the full resolvosome a probable DNA-RuvA(4)-RuvB(12)-RuvC(2) complex forms which resolves the HJ. The cofactor is Mg(2+).

It is found in the cytoplasm. The catalysed reaction is Endonucleolytic cleavage at a junction such as a reciprocal single-stranded crossover between two homologous DNA duplexes (Holliday junction).. Functionally, the RuvA-RuvB-RuvC complex processes Holliday junction (HJ) DNA during genetic recombination and DNA repair. Endonuclease that resolves HJ intermediates. Cleaves cruciform DNA by making single-stranded nicks across the HJ at symmetrical positions within the homologous arms, yielding a 5'-phosphate and a 3'-hydroxyl group; requires a central core of homology in the junction. The consensus cleavage sequence is 5'-(A/T)TT(C/G)-3'. Cleavage occurs on the 3'-side of the TT dinucleotide at the point of strand exchange. HJ branch migration catalyzed by RuvA-RuvB allows RuvC to scan DNA until it finds its consensus sequence, where it cleaves and resolves the cruciform DNA. The sequence is that of Crossover junction endodeoxyribonuclease RuvC from Photobacterium profundum (strain SS9).